The chain runs to 159 residues: Insertion element IS136 uncharacterized 16.9 kDa protein (159 aa).

Residues 126 to 142 (RSFVSPSSSTPSTARSS) show a composition bias toward low complexity. Positions 126–159 (RSFVSPSSSTPSTARSSPGRPLPMQAFPAQTCAT) are disordered.

In Agrobacterium tumefaciens (strain T37), this protein is Insertion element IS136 uncharacterized 16.9 kDa protein.